Here is a 316-residue protein sequence, read N- to C-terminus: Aspartate carbamoyltransferase catalytic subunit (316 aa).

Residues Arg59 and Thr60 each contribute to the carbamoyl phosphate site. Lys88 is a binding site for L-aspartate. Residues Arg109, His137, and Gln140 each coordinate carbamoyl phosphate. L-aspartate is bound by residues Arg170 and Arg232. Carbamoyl phosphate is bound by residues Leu269 and Pro270.

The protein belongs to the aspartate/ornithine carbamoyltransferase superfamily. ATCase family. Heterooligomer of catalytic and regulatory chains.

The catalysed reaction is carbamoyl phosphate + L-aspartate = N-carbamoyl-L-aspartate + phosphate + H(+). Its pathway is pyrimidine metabolism; UMP biosynthesis via de novo pathway; (S)-dihydroorotate from bicarbonate: step 2/3. Its function is as follows. Catalyzes the condensation of carbamoyl phosphate and aspartate to form carbamoyl aspartate and inorganic phosphate, the committed step in the de novo pyrimidine nucleotide biosynthesis pathway. In Methanobrevibacter smithii (strain ATCC 35061 / DSM 861 / OCM 144 / PS), this protein is Aspartate carbamoyltransferase catalytic subunit.